A 135-amino-acid polypeptide reads, in one-letter code: Large ribosomal subunit protein bL21 (135 aa).

Positions 114–135 are disordered; it reads EAEKETPVLDETPAEEVETAAE. Positions 125-135 are enriched in acidic residues; that stretch reads TPAEEVETAAE.

The protein belongs to the bacterial ribosomal protein bL21 family. As to quaternary structure, part of the 50S ribosomal subunit. Contacts protein L20.

Its function is as follows. This protein binds to 23S rRNA in the presence of protein L20. The protein is Large ribosomal subunit protein bL21 of Nostoc punctiforme (strain ATCC 29133 / PCC 73102).